Reading from the N-terminus, the 428-residue chain is 3-phosphoshikimate 1-carboxyvinyltransferase (428 aa).

Residues K21, S22, and R26 each contribute to the 3-phosphoshikimate site. Phosphoenolpyruvate is bound at residue K21. Phosphoenolpyruvate is bound by residues G91 and R119. S164, Q166, D313, and K340 together coordinate 3-phosphoshikimate. Q166 is a binding site for phosphoenolpyruvate. Catalysis depends on D313, which acts as the Proton acceptor. R344 and R386 together coordinate phosphoenolpyruvate.

The protein belongs to the EPSP synthase family. As to quaternary structure, monomer.

The protein resides in the cytoplasm. The catalysed reaction is 3-phosphoshikimate + phosphoenolpyruvate = 5-O-(1-carboxyvinyl)-3-phosphoshikimate + phosphate. It participates in metabolic intermediate biosynthesis; chorismate biosynthesis; chorismate from D-erythrose 4-phosphate and phosphoenolpyruvate: step 6/7. Its function is as follows. Catalyzes the transfer of the enolpyruvyl moiety of phosphoenolpyruvate (PEP) to the 5-hydroxyl of shikimate-3-phosphate (S3P) to produce enolpyruvyl shikimate-3-phosphate and inorganic phosphate. This is 3-phosphoshikimate 1-carboxyvinyltransferase from Campylobacter jejuni subsp. jejuni serotype O:23/36 (strain 81-176).